A 628-amino-acid chain; its full sequence is DNA mismatch repair protein MutL (628 aa).

Positions glycine 350–lysine 402 are disordered. A compositionally biased stretch (polar residues) spans serine 356 to glycine 368. Basic and acidic residues predominate over residues lysine 369–lysine 393.

It belongs to the DNA mismatch repair MutL/HexB family.

This protein is involved in the repair of mismatches in DNA. It is required for dam-dependent methyl-directed DNA mismatch repair. May act as a 'molecular matchmaker', a protein that promotes the formation of a stable complex between two or more DNA-binding proteins in an ATP-dependent manner without itself being part of a final effector complex. The sequence is that of DNA mismatch repair protein MutL from Wolbachia sp. subsp. Brugia malayi (strain TRS).